The chain runs to 363 residues: UDP-N-acetylenolpyruvoylglucosamine reductase (363 aa).

One can recognise an FAD-binding PCMH-type domain in the interval 25–201 (IGPVARRMLT…RSAPVRYREL (177 aa)). The active site involves arginine 168. The Proton donor role is filled by serine 249. Glutamate 352 is an active-site residue.

This sequence belongs to the MurB family. It depends on FAD as a cofactor.

The protein localises to the cytoplasm. It catalyses the reaction UDP-N-acetyl-alpha-D-muramate + NADP(+) = UDP-N-acetyl-3-O-(1-carboxyvinyl)-alpha-D-glucosamine + NADPH + H(+). It participates in cell wall biogenesis; peptidoglycan biosynthesis. Functionally, cell wall formation. In Mycolicibacterium smegmatis (strain ATCC 700084 / mc(2)155) (Mycobacterium smegmatis), this protein is UDP-N-acetylenolpyruvoylglucosamine reductase.